A 444-amino-acid polypeptide reads, in one-letter code: Divalent metal cation transporter MntH (444 aa).

The next 11 membrane-spanning stretches (helical) occupy residues 31–51 (GGHW…VSVG), 68–88 (FGYL…VLQG), 115–135 (LALW…EVIG), 146–166 (IPLT…LLLM), 175–195 (AFVM…IALA), 212–232 (VVTN…TVMP), 267–287 (VALM…AAVF), 303–323 (ALLA…VALL), 356–376 (LLTR…YGEA), 381–401 (LLVL…IPLV), and 413–433 (LVAP…IVGL).

This sequence belongs to the NRAMP family.

Its subcellular location is the cell inner membrane. Its function is as follows. H(+)-stimulated, divalent metal cation uptake system. The sequence is that of Divalent metal cation transporter MntH from Xanthomonas campestris pv. campestris (strain ATCC 33913 / DSM 3586 / NCPPB 528 / LMG 568 / P 25).